A 56-amino-acid polypeptide reads, in one-letter code: MIKKAMLLIMLYMVLVVNDLILYNILSKAIIKKSKNVWKLKHKPLKNINLETLKNY.

The chain crosses the membrane as a helical span at residues 6-26 (MLLIMLYMVLVVNDLILYNIL).

Its subcellular location is the membrane. This is an uncharacterized protein from Dictyostelium discoideum (Social amoeba).